We begin with the raw amino-acid sequence, 456 residues long: Bifunctional protein GlmU (456 aa).

Positions 1-229 are pyrophosphorylase; sequence MLNSAMSVVI…ISETDGVNNR (229 aa). Residues 11-14, Lys-25, Gln-76, 81-82, 103-105, Gly-140, Glu-154, Asn-169, and Asn-227 each bind UDP-N-acetyl-alpha-D-glucosamine; these read LAAG, GT, and YGD. Residue Asp-105 coordinates Mg(2+). Asn-227 provides a ligand contact to Mg(2+). The segment at 230-250 is linker; sequence LQLSRLERIYQAEQAEKLLLS. The segment at 251-456 is N-acetyltransferase; the sequence is GVMLRDPARF…QGWQRPVKKK (206 aa). The UDP-N-acetyl-alpha-D-glucosamine site is built by Arg-333 and Lys-351. Residue His-363 is the Proton acceptor of the active site. UDP-N-acetyl-alpha-D-glucosamine contacts are provided by Tyr-366 and Asn-377. Residues Ala-380, 386–387, Ser-405, Ala-423, and Arg-440 contribute to the acetyl-CoA site; that span reads NY.

This sequence in the N-terminal section; belongs to the N-acetylglucosamine-1-phosphate uridyltransferase family. It in the C-terminal section; belongs to the transferase hexapeptide repeat family. In terms of assembly, homotrimer. It depends on Mg(2+) as a cofactor.

It localises to the cytoplasm. The enzyme catalyses alpha-D-glucosamine 1-phosphate + acetyl-CoA = N-acetyl-alpha-D-glucosamine 1-phosphate + CoA + H(+). It catalyses the reaction N-acetyl-alpha-D-glucosamine 1-phosphate + UTP + H(+) = UDP-N-acetyl-alpha-D-glucosamine + diphosphate. It participates in nucleotide-sugar biosynthesis; UDP-N-acetyl-alpha-D-glucosamine biosynthesis; N-acetyl-alpha-D-glucosamine 1-phosphate from alpha-D-glucosamine 6-phosphate (route II): step 2/2. The protein operates within nucleotide-sugar biosynthesis; UDP-N-acetyl-alpha-D-glucosamine biosynthesis; UDP-N-acetyl-alpha-D-glucosamine from N-acetyl-alpha-D-glucosamine 1-phosphate: step 1/1. It functions in the pathway bacterial outer membrane biogenesis; LPS lipid A biosynthesis. Its function is as follows. Catalyzes the last two sequential reactions in the de novo biosynthetic pathway for UDP-N-acetylglucosamine (UDP-GlcNAc). The C-terminal domain catalyzes the transfer of acetyl group from acetyl coenzyme A to glucosamine-1-phosphate (GlcN-1-P) to produce N-acetylglucosamine-1-phosphate (GlcNAc-1-P), which is converted into UDP-GlcNAc by the transfer of uridine 5-monophosphate (from uridine 5-triphosphate), a reaction catalyzed by the N-terminal domain. In Salmonella gallinarum (strain 287/91 / NCTC 13346), this protein is Bifunctional protein GlmU.